Reading from the N-terminus, the 403-residue chain is Glucosyl-3-phosphoglycerate synthase (403 aa).

Residue Asp-150 participates in a divalent metal cation binding. Gly-189–Thr-192 contributes to the (2R)-3-phosphoglycerate binding site. His-273 lines the a divalent metal cation pocket.

The protein belongs to the glycosyltransferase 2 family. As to quaternary structure, homodimer. The cofactor is Mn(2+). Requires Co(2+) as cofactor. Mg(2+) serves as cofactor. It depends on Ni(2+) as a cofactor.

It carries out the reaction an NDP-alpha-D-glucose + (2R)-3-phosphoglycerate = (2R)-2-O-(alpha-D-glucopyranosyl)-3-phospho-glycerate + a ribonucleoside 5'-diphosphate + H(+). Involved in the biosynthesis of 6-O-methylglucose lipopolysaccarides (MGLPs). Catalyzes the transfer of a glucose (Glc) moiety from uridine diphosphate (UDP-Glc) to the position 2 of 3-phospho-D-glycerate (3-PGA) to form glucosyl-3-phosphoglycerate (GPG). GpgS is most active with UDP-glucose, followed by GDP-glucose, ADP-glucose, and to a lesser extent, TDP-glucose. 3-PGA is the only acceptor for these glucosyl donors. This chain is Glucosyl-3-phosphoglycerate synthase, found in Persephonella marina (strain DSM 14350 / EX-H1).